The following is a 61-amino-acid chain: MAVNVQQYLNKEYEVECDGQMVRLKPVKAWVLQPKGRKGVVIGLFKCPNGKTLRKAIGKIE.

This sequence belongs to the Cren7 family. Monomer. Post-translationally, methylated at multiple sites, to varying extents.

It localises to the chromosome. It is found in the cytoplasm. Its function is as follows. A chromatin protein, binds double-stranded DNA without sequence specificity. Constrains negative DNA supercoils. This chain is Chromatin protein Cren7, found in Caldivirga maquilingensis (strain ATCC 700844 / DSM 13496 / JCM 10307 / IC-167).